We begin with the raw amino-acid sequence, 418 residues long: Gamma-glutamyl phosphate reductase (418 aa).

It belongs to the gamma-glutamyl phosphate reductase family.

It localises to the cytoplasm. The catalysed reaction is L-glutamate 5-semialdehyde + phosphate + NADP(+) = L-glutamyl 5-phosphate + NADPH + H(+). Its pathway is amino-acid biosynthesis; L-proline biosynthesis; L-glutamate 5-semialdehyde from L-glutamate: step 2/2. Catalyzes the NADPH-dependent reduction of L-glutamate 5-phosphate into L-glutamate 5-semialdehyde and phosphate. The product spontaneously undergoes cyclization to form 1-pyrroline-5-carboxylate. The chain is Gamma-glutamyl phosphate reductase from Geobacter metallireducens (strain ATCC 53774 / DSM 7210 / GS-15).